The primary structure comprises 124 residues: Darcynin homolog (124 aa).

It belongs to the darcynin family.

The protein is Darcynin homolog of Granulibacter bethesdensis (strain ATCC BAA-1260 / CGDNIH1).